The primary structure comprises 250 residues: UPF0193 protein EVG1 homolog (250 aa).

Positions 86-110 (ESLRNGEPLPLPEPPRPNTNNDPDK) are disordered.

Belongs to the UPF0193 (EVG1) family.

The chain is UPF0193 protein EVG1 homolog from Drosophila melanogaster (Fruit fly).